The sequence spans 526 residues: Cytochrome P450 monooxygeanse terK (526 aa).

The chain crosses the membrane as a helical span at residues 21 to 43; the sequence is NWGQLTGALLFLAACTWIYLPAF. Position 465 (Cys-465) interacts with heme.

Belongs to the cytochrome P450 family. It depends on heme as a cofactor.

It localises to the membrane. It participates in secondary metabolite biosynthesis. In terms of biological role, cytochrome P450 monooxygeanse; part of the gene cluster that mediates the biosynthesis of terpendoles, indole-diterpene (IDT) mycotoxins including terpendole I, terpendole K, terpendole C, as well as the kinesin Eg5 inhibitor terpendole E. Terpendoles biosynthesis begins with the synthesis of geranylgeranyl diphosphate (GGPP) by a yet unidentified GGPP synthase. Condensation of indole-3-glycerol phosphate with GGPP by the prenyltransferase terC then forms 3-geranylgeranylindole (3-GGI), followed by epoxidation and cyclization of this intermediate (by the FAD-dependent monooxygeanse terM and the terpene cyclase terB) to form paspaline. The cytochrome monooxygenase terQ then hydroxylates paspalline at C-11 to yield terpendole E. The cytochrome monooxygenase terP converts terpendole E to 13-desoxyterpendole I, and terQ converts 13-desoxyterpendole I into terpendole I. TerF and terK are required for conversion of terpendole I to terpendole C which is further converted to terpendole K. This chain is Cytochrome P450 monooxygeanse terK, found in Tolypocladium album (Soil fungus).